The following is a 132-amino-acid chain: Small ribosomal subunit protein uS8 (132 aa).

The protein belongs to the universal ribosomal protein uS8 family. Part of the 30S ribosomal subunit. Contacts proteins S5 and S12.

Its function is as follows. One of the primary rRNA binding proteins, it binds directly to 16S rRNA central domain where it helps coordinate assembly of the platform of the 30S subunit. The sequence is that of Small ribosomal subunit protein uS8 from Acidobacterium capsulatum (strain ATCC 51196 / DSM 11244 / BCRC 80197 / JCM 7670 / NBRC 15755 / NCIMB 13165 / 161).